A 308-amino-acid polypeptide reads, in one-letter code: Spermidine synthase 1 (308 aa).

The 238-residue stretch at 17-254 folds into the PABS domain; that stretch reads PGWFSEISPL…GVIGFMLCST (238 aa). Residue glutamine 48 participates in S-adenosyl 3-(methylsulfanyl)propylamine binding. Residue tyrosine 78 coordinates putrescine. S-adenosyl 3-(methylsulfanyl)propylamine-binding positions include glutamine 79, aspartate 103, glutamate 123, 154-155, and aspartate 173; that span reads DG. The active-site Proton acceptor is aspartate 173. Putrescine contacts are provided by residues 173-176 and tyrosine 242; that span reads DSSD.

Belongs to the spermidine/spermine synthase family.

It catalyses the reaction S-adenosyl 3-(methylsulfanyl)propylamine + putrescine = S-methyl-5'-thioadenosine + spermidine + H(+). The protein operates within amine and polyamine biosynthesis; spermidine biosynthesis; spermidine from putrescine: step 1/1. This chain is Spermidine synthase 1, found in Datura stramonium (Jimsonweed).